Consider the following 120-residue polypeptide: U13-lycotoxin-Ls1c (120 aa).

Positions 1–16 are cleaved as a signal peptide; the sequence is MKILFVLISILYAVYC. The propeptide occupies 17–54; the sequence is FSSEEDVDSAYLANELEPVEDINSEQYAALEPKEEQER. 3 disulfide bridges follow: C56–C70, C69–C87, and C78–C85. The Agouti domain maps to 56-95; the sequence is CADMGQDRKDDCDCCLNIATCNCWFGRYFCSCTFGDYQTC.

It belongs to the neurotoxin 05 (agouti) family. Contains 5 disulfide bonds. In terms of tissue distribution, expressed by the venom gland.

Its subcellular location is the secreted. The polypeptide is U13-lycotoxin-Ls1c (Lycosa singoriensis (Wolf spider)).